Here is a 514-residue protein sequence, read N- to C-terminus: SFRLSLSASTYAQRGSFTTPEHDFTLFPHRNHSVTSESRIPSEQTLKSLTDIPGNWRKNWLNVYYFWRSNGLNNAHQWMLDNFNKYGPIYREKIAYYESINIINPADAVIMNKSEGPFPKRIEMAPWVAYRDLRKENYGVQLLNGENWKRTRLILNNSIFAQSSIQRLVPLFNEVVLDFVSMVHKEVEKSRSDYWKTDLTNDLFKLALEVICYILYGERLDLLQRKYNKAPQKFIDSIATMFHSTPIMLYVPPSLLKSINSKIWQQHVGSWDNIFEHADTYLKKAYRQFQQGSKNEHAFPGVLTELLLQGALPFEDIRASIIDVMSGAIDTTSTTVHWMMYELAKHPHIQKNVRSEIMEAHQKTEGDPVKMLKSVPLLKCVVKETLRLYPVAISIQRYLNEDTVLQNYHIPAGTLVQLGLYAMGRNPKIFKNPEQYNPERWLKGEDTHFRHLGFGFGPRQCIGRRIAETQMVLLMIHMLQNFKIETDPMTEVKSKFSLILIPDKPINLKFTPIK.

Residues 1–39 (SFRLSLSASTYAQRGSFTTPEHDFTLFPHRNHSVTSESR) constitute a mitochondrion transit peptide. Cys461 is a heme binding site.

Belongs to the cytochrome P450 family. The cofactor is heme.

The protein localises to the mitochondrion inner membrane. The catalysed reaction is 6 reduced [adrenodoxin] + cholesterol + 3 O2 + 6 H(+) = 4-methylpentanal + pregnenolone + 6 oxidized [adrenodoxin] + 4 H2O. Its pathway is lipid metabolism; C21-steroid hormone metabolism. Its function is as follows. Catalyzes the side-chain cleavage reaction of cholesterol to pregnenolone, the precursor of most steroid hormones. This chain is Cholesterol side-chain cleavage enzyme, mitochondrial (CYP11A1), found in Hypanus americanus (Southern stingray).